A 356-amino-acid polypeptide reads, in one-letter code: MFDRLSVLEDRYMQLNEMLADPEVLSDSTKLRQYSKEQAQLEETVQMYRQYKETSQAFKEAKSMLEDRTLDAEMRELAKEEMNLLEPEVKELEAKLRILLLPKDPNDEKNVIVEVRGAAGGDEAALFAGDLYKMYTRFAERQNWKVELIDANYTELGGFKEVTFMINGAGAYSKLKFENGAHRVQRVPSTESGGRIHTSTATVAVLPEAEDVEVHIDMKDVRVDTFTSSGPGGQSVNTTQSAVRLTHIPSGLVVSCQDEKSQHKNKDKAMKVLRARLYDKMQSEHMEELSAQRKSAVGTGDRSERIRTYNFPQSRVTDHRIGLTLQKLDRVLAGELEDIIDALIMDEQARLMEDAE.

Q234 is modified (N5-methylglutamine).

Belongs to the prokaryotic/mitochondrial release factor family. In terms of processing, methylated by PrmC. Methylation increases the termination efficiency of RF1.

The protein resides in the cytoplasm. Peptide chain release factor 1 directs the termination of translation in response to the peptide chain termination codons UAG and UAA. This chain is Peptide chain release factor 1, found in Exiguobacterium sp. (strain ATCC BAA-1283 / AT1b).